We begin with the raw amino-acid sequence, 199 residues long: MAKVLVLYYSAYGHIETMANAVAEGAREAGATVDIKRVPELVPPEIAKASHYKLDQAAPIATVDDLANYDAIIIGTGTRFGRITSQMANFLDQAGGLWAKGVLHGKVGGAFTSTASQHGGQETTLFSIITNLLHFGMVVVGLNYGYGGLTTLDEVAGGSPYGATTITGGDGARQPSANELGGARYQGKVIAETAIKLHG.

The Flavodoxin-like domain maps to 4–190; that stretch reads VLVLYYSAYG…GGARYQGKVI (187 aa). FMN is bound by residues 10–15 and 78–80; these read SAYGHI and TRF. Y12 provides a ligand contact to NAD(+). A substrate-binding site is contributed by W98. Residues 113 to 119 and H134 contribute to the FMN site; that span reads STASQHG.

This sequence belongs to the WrbA family. It depends on FMN as a cofactor.

The catalysed reaction is a quinone + NADH + H(+) = a quinol + NAD(+). The enzyme catalyses a quinone + NADPH + H(+) = a quinol + NADP(+). The sequence is that of NAD(P)H dehydrogenase (quinone) from Rhodopseudomonas palustris (strain BisB18).